Consider the following 378-residue polypeptide: Succinyl-diaminopimelate desuccinylase (378 aa).

His66 contacts Zn(2+). The active site involves Asp68. Asp100 lines the Zn(2+) pocket. Glu134 functions as the Proton acceptor in the catalytic mechanism. Zn(2+) contacts are provided by Glu135, Glu163, and His350.

The protein belongs to the peptidase M20A family. DapE subfamily. In terms of assembly, homodimer. Zn(2+) serves as cofactor. Requires Co(2+) as cofactor.

The enzyme catalyses N-succinyl-(2S,6S)-2,6-diaminopimelate + H2O = (2S,6S)-2,6-diaminopimelate + succinate. It participates in amino-acid biosynthesis; L-lysine biosynthesis via DAP pathway; LL-2,6-diaminopimelate from (S)-tetrahydrodipicolinate (succinylase route): step 3/3. In terms of biological role, catalyzes the hydrolysis of N-succinyl-L,L-diaminopimelic acid (SDAP), forming succinate and LL-2,6-diaminopimelate (DAP), an intermediate involved in the bacterial biosynthesis of lysine and meso-diaminopimelic acid, an essential component of bacterial cell walls. The chain is Succinyl-diaminopimelate desuccinylase from Hydrogenovibrio crunogenus (strain DSM 25203 / XCL-2) (Thiomicrospira crunogena).